The following is a 73-amino-acid chain: UPF0154 protein BCG9842_B1526 (73 aa).

The chain crosses the membrane as a helical span at residues Ile-3–Phe-23.

It belongs to the UPF0154 family.

The protein localises to the cell membrane. The sequence is that of UPF0154 protein BCG9842_B1526 from Bacillus cereus (strain G9842).